A 246-amino-acid polypeptide reads, in one-letter code: Small ribosomal subunit protein uS2 (246 aa).

This sequence belongs to the universal ribosomal protein uS2 family.

The protein is Small ribosomal subunit protein uS2 of Helicobacter acinonychis (strain Sheeba).